Reading from the N-terminus, the 241-residue chain is Capsid protein (241 aa).

A Bipartite nuclear localization signal motif is present at residues 1-26; sequence MSPASSWKRKRPSSSSAQASKKRRVY. Positions 1 to 30 are disordered; it reads MSPASSWKRKRPSSSSAQASKKRRVYRPAV.

Belongs to the geminiviridae capsid protein family. Homomultimer. Interacts with the movement protein. Binds to single-stranded and double-stranded viral DNA.

Its subcellular location is the virion. The protein resides in the host nucleus. Its function is as follows. Encapsidates the viral genome into characteristic twinned ('geminate') particles. Binds the genomic viral ssDNA and shuttles it into and out of the cell nucleus. Plays a role in protection of the genome from degradation, virus acquisition and transmission by insect vectors, infectivity, and systemic movement. The CP of monopartite geminiviruses is absolutely essential for virus movement. In Avena sativa (Oat), this protein is Capsid protein.